Reading from the N-terminus, the 245-residue chain is MEEARRQSLEEDFEGQATHTGPKGVINDWRKFKLESEDSDSIPPCKKEILKQMSSPQSRDDKDSKERFSRKMSIQEYELIHQDKEDENCLRKYRRQCMQDMHQKLSFGPRYGFVYELETGEQFLETIEKEQKITTIVVHIYEDGIKGCDALNSSLACLAAEYPMVKFCKIKASNTGAGDRFSSDVLPTLLVYKGGELISNFLSVAEQFAEEFFAGDVESFLNEYGLLPEREIHALEQTSMEEDVE.

Positions 1–67 (MEEARRQSLE…SRDDKDSKER (67 aa)) are disordered. Residues 1–241 (MEEARRQSLE…IHALEQTSME (241 aa)) form the Phosducin domain. Residues 58-67 (SRDDKDSKER) are compositionally biased toward basic and acidic residues. S73 is modified (phosphoserine; by PKA). Residues 111 to 245 (YGFVYELETG…EQTSMEEDVE (135 aa)) form a thioredoxin fold region.

This sequence belongs to the phosducin family. As to quaternary structure, forms a complex with the beta and gamma subunits of the GTP-binding protein, transducin. Interacts with CRX. Light-induced changes in cyclic nucleotide levels modulate the phosphorylation of this protein by cAMP kinase.

Its subcellular location is the cytoplasm. It is found in the cytosol. The protein localises to the nucleus. It localises to the cell projection. The protein resides in the cilium. Its subcellular location is the photoreceptor outer segment. It is found in the photoreceptor inner segment. Functionally, may participate in the regulation of visual phototransduction or in the integration of photoreceptor metabolism. Inhibits the transcriptional activation activity of the cone-rod homeobox CRX. The protein is Phosducin (PDC) of Equus caballus (Horse).